A 245-amino-acid polypeptide reads, in one-letter code: Eukaryotic translation initiation factor 6 (245 aa).

Position 113 is a phosphotyrosine (tyrosine 113). A Phosphothreonine modification is found at threonine 165. Serine 166 carries the post-translational modification Phosphoserine. Serine 174 and serine 175 each carry phosphoserine; by CK1. Phosphoserine; by PKC is present on serine 235. Phosphoserine is present on residues serine 239 and serine 243.

Belongs to the eIF-6 family. Monomer. Associates with the 60S ribosomal subunit. Interacts with RACK1. Interacts with DICER1, AGO2, TARBP2, MOV10 and RPL7A; they form a large RNA-induced silencing complex (RISC). In terms of processing, phosphorylation at Ser-174 and Ser-175 by CSNK1D/CK1 promotes nuclear export. Ufmylated by UFL1. As to expression, expressed at very high levels in colon carcinoma with lower levels in normal colon and ileum and lowest levels in kidney and muscle (at protein level).

The protein resides in the cytoplasm. It localises to the nucleus. The protein localises to the nucleolus. Functionally, binds to the 60S ribosomal subunit and prevents its association with the 40S ribosomal subunit to form the 80S initiation complex in the cytoplasm. Behaves as a stimulatory translation initiation factor downstream insulin/growth factors. Is also involved in ribosome biogenesis. Associates with pre-60S subunits in the nucleus and is involved in its nuclear export. Cytoplasmic release of TIF6 from 60S subunits and nuclear relocalization is promoted by a RACK1 (RACK1)-dependent protein kinase C activity. In tissues responsive to insulin, controls fatty acid synthesis and glycolysis by exerting translational control of adipogenic transcription factors such as CEBPB, CEBPD and ATF4 that have G/C rich or uORF in their 5'UTR. Required for ROS-dependent megakaryocyte maturation and platelets formation, controls the expression of mitochondrial respiratory chain genes involved in reactive oxygen species (ROS) synthesis. Involved in miRNA-mediated gene silencing by the RNA-induced silencing complex (RISC). Required for both miRNA-mediated translational repression and miRNA-mediated cleavage of complementary mRNAs by RISC. Modulates cell cycle progression and global translation of pre-B cells, its activation seems to be rate-limiting in tumorigenesis and tumor growth. The polypeptide is Eukaryotic translation initiation factor 6 (Homo sapiens (Human)).